The following is a 483-amino-acid chain: Aspartyl/glutamyl-tRNA(Asn/Gln) amidotransferase subunit B (483 aa).

This sequence belongs to the GatB/GatE family. GatB subfamily. In terms of assembly, heterotrimer of A, B and C subunits.

It catalyses the reaction L-glutamyl-tRNA(Gln) + L-glutamine + ATP + H2O = L-glutaminyl-tRNA(Gln) + L-glutamate + ADP + phosphate + H(+). The enzyme catalyses L-aspartyl-tRNA(Asn) + L-glutamine + ATP + H2O = L-asparaginyl-tRNA(Asn) + L-glutamate + ADP + phosphate + 2 H(+). Functionally, allows the formation of correctly charged Asn-tRNA(Asn) or Gln-tRNA(Gln) through the transamidation of misacylated Asp-tRNA(Asn) or Glu-tRNA(Gln) in organisms which lack either or both of asparaginyl-tRNA or glutaminyl-tRNA synthetases. The reaction takes place in the presence of glutamine and ATP through an activated phospho-Asp-tRNA(Asn) or phospho-Glu-tRNA(Gln). The sequence is that of Aspartyl/glutamyl-tRNA(Asn/Gln) amidotransferase subunit B from Anaeromyxobacter sp. (strain Fw109-5).